Reading from the N-terminus, the 369-residue chain is Peptide chain release factor 2 (369 aa).

An N5-methylglutamine modification is found at Gln252.

The protein belongs to the prokaryotic/mitochondrial release factor family. Post-translationally, methylated by PrmC. Methylation increases the termination efficiency of RF2.

It is found in the cytoplasm. In terms of biological role, peptide chain release factor 2 directs the termination of translation in response to the peptide chain termination codons UGA and UAA. This chain is Peptide chain release factor 2, found in Staphylococcus aureus (strain MRSA252).